Here is a 161-residue protein sequence, read N- to C-terminus: uncharacterized protein (161 aa).

This is an uncharacterized protein from Mycobacterium tuberculosis (strain CDC 1551 / Oshkosh).